A 1374-amino-acid polypeptide reads, in one-letter code: Major capsid protein (1374 aa).

The protein belongs to the herpesviridae major capsid protein family. As to quaternary structure, homomultimer. Makes the hexons and eleven out of twelve pentons. Interacts with triplex proteins 1/TRX1 and 2/TRX2; adjacent capsomers are linked together in groups of three by triplexes, heterotrimeric complexes composed of one molecule of TRX1 and two molecules of TRX2. Interacts with scaffold protein; this interaction allows efficient MCP transport to the host nucleus. Interacts with capsid vertex component 2/CVC2. Interacts with the small capsomere-interacting protein/SCP.

It localises to the virion. Its subcellular location is the host nucleus. Self-assembles to form an icosahedral capsid with a T=16 symmetry, about 200 nm in diameter, and consisting of 150 hexons and 12 pentons (total of 162 capsomers). Hexons form the edges and faces of the capsid and are each composed of six MCP molecules. In contrast, one penton is found at each of the 12 vertices. Eleven of the pentons are MCP pentamers, while the last vertex is occupied by the portal complex. The capsid is surrounded by a layer of proteinaceous material designated the tegument which, in turn, is enclosed in an envelope of host cell-derived lipids containing virus-encoded glycoproteins. The protein is Major capsid protein of Homo sapiens (Human).